We begin with the raw amino-acid sequence, 193 residues long: Holliday junction branch migration complex subunit RuvA (193 aa).

Residues 1-64 are domain I; that stretch reads MIGRIAGTLL…EDAHLLFGFA (64 aa). The domain II stretch occupies residues 65–144; that stretch reads TATERNTFRE…DLGHAPGATP (80 aa). Residues 145-151 form a flexible linker region; that stretch reads LADSAVD. The domain III stretch occupies residues 151–193; the sequence is DILNALLALGYSEKEAAQAIKQVPAGTGVSDGIKLALKALSKG.

The protein belongs to the RuvA family. In terms of assembly, homotetramer. Forms an RuvA(8)-RuvB(12)-Holliday junction (HJ) complex. HJ DNA is sandwiched between 2 RuvA tetramers; dsDNA enters through RuvA and exits via RuvB. An RuvB hexamer assembles on each DNA strand where it exits the tetramer. Each RuvB hexamer is contacted by two RuvA subunits (via domain III) on 2 adjacent RuvB subunits; this complex drives branch migration. In the full resolvosome a probable DNA-RuvA(4)-RuvB(12)-RuvC(2) complex forms which resolves the HJ.

It is found in the cytoplasm. In terms of biological role, the RuvA-RuvB-RuvC complex processes Holliday junction (HJ) DNA during genetic recombination and DNA repair, while the RuvA-RuvB complex plays an important role in the rescue of blocked DNA replication forks via replication fork reversal (RFR). RuvA specifically binds to HJ cruciform DNA, conferring on it an open structure. The RuvB hexamer acts as an ATP-dependent pump, pulling dsDNA into and through the RuvAB complex. HJ branch migration allows RuvC to scan DNA until it finds its consensus sequence, where it cleaves and resolves the cruciform DNA. In Cupriavidus metallidurans (strain ATCC 43123 / DSM 2839 / NBRC 102507 / CH34) (Ralstonia metallidurans), this protein is Holliday junction branch migration complex subunit RuvA.